The primary structure comprises 372 residues: Peptide chain release factor 1 (372 aa).

At Gln237 the chain carries N5-methylglutamine.

The protein belongs to the prokaryotic/mitochondrial release factor family. In terms of processing, methylated by PrmC. Methylation increases the termination efficiency of RF1.

Its subcellular location is the cytoplasm. Peptide chain release factor 1 directs the termination of translation in response to the peptide chain termination codons UAG and UAA. The chain is Peptide chain release factor 1 from Anaeromyxobacter sp. (strain Fw109-5).